Consider the following 68-residue polypeptide: Amphipathic peptide VmCT1 (68 aa).

A signal peptide spans 1–23; it reads MKTQFVILIVAVVLLQLISHSEA. Residue Phe36 is modified to Phenylalanine amide. Residues 40-68 constitute a propeptide that is removed on maturation; sequence GLRNFDDLDDTFEPEMSEADLKYLQDLLR.

It belongs to the non-disulfide-bridged peptide (NDBP) superfamily. Short antimicrobial peptide (group 4) family. In terms of tissue distribution, expressed by the venom gland.

It localises to the secreted. It is found in the target cell membrane. In terms of biological role, cationic amphipathic peptide with antibacterial activities against both Gram-positive and Gram-negative bacteria. Also shows antifungal activities. Is mildly hemolytic against human erythrocytes. In addition, when tested in vitro on the parasite Trypanosoma cruzi (responsible of the Chagas disease), is able to reduce the number of the three forms (epimastigote, trypomastigote and amastigote). Also shows antiplasmodial and cytotoxic activity (tested on Plasmodium gallinaceum, and MCF-7 breast cancer cell line). This Vaejovis mexicanus smithi (Mexican scorpion) protein is Amphipathic peptide VmCT1.